A 126-amino-acid chain; its full sequence is Protein HEAT-INDUCED TAS1 TARGET 3 (126 aa).

Belongs to the heat induced plant HTT protein family. Expressed in seedlings, leaves, stems, inflorescences and siliques.

The protein resides in the cytoplasm. The protein localises to the nucleus. Functionally, mediates both basal and acquired thermotolerance. This chain is Protein HEAT-INDUCED TAS1 TARGET 3, found in Arabidopsis thaliana (Mouse-ear cress).